The following is a 222-amino-acid chain: Probable translocation protein y4yL (222 aa).

4 helical membrane-spanning segments follow: residues 6–26 (PAIL…LAVV), 52–72 (PNIV…APVA), 158–178 (IGFL…TILM), and 182–202 (MSMV…FVAI).

The protein belongs to the FliP/MopC/SpaP family.

It is found in the cell membrane. Its function is as follows. Could be involved in the secretion of an unknown factor. The chain is Probable translocation protein y4yL from Sinorhizobium fredii (strain NBRC 101917 / NGR234).